The following is a 450-amino-acid chain: tRNA modification GTPase MnmE (450 aa).

Residues Arg-23, Glu-81, and Lys-120 each coordinate (6S)-5-formyl-5,6,7,8-tetrahydrofolate. Positions 216–373 (GIHLVLAGKP…LLKKIATLAG (158 aa)) constitute a TrmE-type G domain. GTP-binding positions include 226–231 (NAGKSS), 245–251 (TPQAGTT), 270–273 (DTAG), and 337–340 (NKAD). The Mg(2+) site is built by Ser-230 and Thr-251. Lys-450 provides a ligand contact to (6S)-5-formyl-5,6,7,8-tetrahydrofolate.

Belongs to the TRAFAC class TrmE-Era-EngA-EngB-Septin-like GTPase superfamily. TrmE GTPase family. In terms of assembly, homodimer. Heterotetramer of two MnmE and two MnmG subunits. The cofactor is K(+).

It is found in the cytoplasm. Exhibits a very high intrinsic GTPase hydrolysis rate. Involved in the addition of a carboxymethylaminomethyl (cmnm) group at the wobble position (U34) of certain tRNAs, forming tRNA-cmnm(5)s(2)U34. The protein is tRNA modification GTPase MnmE of Dichelobacter nodosus (strain VCS1703A).